Reading from the N-terminus, the 267-residue chain is Zerumbone synthase (267 aa).

NAD(+) is bound at residue 9-33; the sequence is LVTGGASGIGESIARLFIEHGAKIC. Ser142 serves as a coordination point for substrate. Tyr155 acts as the Proton acceptor in catalysis.

It belongs to the short-chain dehydrogenases/reductases (SDR) family. As to expression, expressed in leaves, stems and rhizomes.

The enzyme catalyses 10-hydroxy-alpha-humulene + NAD(+) = zerumbone + NADH + H(+). Its function is as follows. Catalyzes 8-hydroxy-alpha-humulene into zerumbone in presence of NAD. Also converts borneol to camphor in vitro. Zerumbone is a highly promising multi-anticancer agent. The polypeptide is Zerumbone synthase (ZSD1) (Zingiber zerumbet (Shampoo ginger)).